The following is a 161-amino-acid chain: Calcium-binding protein CML24 (161 aa).

4 EF-hand domains span residues 13-48, 49-84, 90-125, and 126-161; these read GSMD…LSPT, ASPE…GIGG, NDVS…LGEK, and CSVQ…GGGA. Aspartate 26, asparagine 28, aspartate 30, lysine 32, glutamate 37, aspartate 62, aspartate 64, asparagine 66, glutamate 73, aspartate 103, aspartate 105, asparagine 107, arginine 109, glutamate 114, aspartate 139, aspartate 141, aspartate 143, cysteine 145, and glutamate 150 together coordinate Ca(2+).

Expressed in seed coat, seedling radical, cotyledons, hypocotyl, shoot apex and elongating root. Expressed in the vasculature of cotyledons, leaves and roots. Highly expressed in guard cells, trichomes and hydathodes. Expressed in inflorescence stem branch points, silique abscission zone, young and mature styles and stigmatic papillae, mature anthers and developing seed.

Calcium-binding protein that may positively regulate abscisic acid (ABA) inhibition of germination and seedling development. May be required for photoperiod-induced flowering and function in ion homeostasis. The sequence is that of Calcium-binding protein CML24 (CML24) from Arabidopsis thaliana (Mouse-ear cress).